We begin with the raw amino-acid sequence, 190 residues long: MDVGSKEVLIENPPDYSAAPQGRFGLPCFPSSLKRLLIIVVVIVLVVVVIVGALLMGLHMSQKHTEMVLEMSLGGPEAQQRLALQERAGTTATFSIGSTGIVVYDYQRLLIAYKPAPGTCCYIMKMAPENIPSLEALTRKFQNFQVKPAVSTSKLGQEEGHNAGSASPGDLDFLGTTVSTLCGEVPLYYI.

Residues 1–23 constitute a propeptide that is removed on maturation; the sequence is MDVGSKEVLIENPPDYSAAPQGR. Cysteine 28 carries the S-palmitoyl cysteine lipid modification. The propeptide occupies 59–190; that stretch reads HMSQKHTEMV…LCGEVPLYYI (132 aa). Residues 94 to 190 form the BRICHOS domain; it reads FSIGSTGIVV…LCGEVPLYYI (97 aa). A disulfide bond links cysteine 121 and cysteine 182.

The protein localises to the secreted. Its subcellular location is the extracellular space. The protein resides in the surface film. Functionally, pulmonary surfactant associated proteins promote alveolar stability by lowering the surface tension at the air-liquid interface in the peripheral air spaces. This is Surfactant protein C (SFTPC) from Neovison vison (American mink).